A 338-amino-acid chain; its full sequence is Ketol-acid reductoisomerase (NADP(+)) (338 aa).

A KARI N-terminal Rossmann domain is found at methionine 1 to threonine 181. NADP(+) is bound by residues phenylalanine 24–glutamine 27, arginine 47, serine 52, and aspartate 82–glutamine 85. Histidine 107 is a catalytic residue. Glycine 133 is a binding site for NADP(+). The KARI C-terminal knotted domain maps to threonine 182–isoleucine 327. Mg(2+)-binding residues include aspartate 190, glutamate 194, glutamate 226, and glutamate 230. Serine 251 provides a ligand contact to substrate.

This sequence belongs to the ketol-acid reductoisomerase family. Mg(2+) serves as cofactor.

It carries out the reaction (2R)-2,3-dihydroxy-3-methylbutanoate + NADP(+) = (2S)-2-acetolactate + NADPH + H(+). The enzyme catalyses (2R,3R)-2,3-dihydroxy-3-methylpentanoate + NADP(+) = (S)-2-ethyl-2-hydroxy-3-oxobutanoate + NADPH + H(+). Its pathway is amino-acid biosynthesis; L-isoleucine biosynthesis; L-isoleucine from 2-oxobutanoate: step 2/4. The protein operates within amino-acid biosynthesis; L-valine biosynthesis; L-valine from pyruvate: step 2/4. Its function is as follows. Involved in the biosynthesis of branched-chain amino acids (BCAA). Catalyzes an alkyl-migration followed by a ketol-acid reduction of (S)-2-acetolactate (S2AL) to yield (R)-2,3-dihydroxy-isovalerate. In the isomerase reaction, S2AL is rearranged via a Mg-dependent methyl migration to produce 3-hydroxy-3-methyl-2-ketobutyrate (HMKB). In the reductase reaction, this 2-ketoacid undergoes a metal-dependent reduction by NADPH to yield (R)-2,3-dihydroxy-isovalerate. This is Ketol-acid reductoisomerase (NADP(+)) from Sulfurimonas denitrificans (strain ATCC 33889 / DSM 1251) (Thiomicrospira denitrificans (strain ATCC 33889 / DSM 1251)).